Reading from the N-terminus, the 185-residue chain is TATA-box-binding protein 3 (185 aa).

A run of 2 repeats spans residues 7–84 (IENV…ANKL) and 100–178 (VQNI…RKEF).

Belongs to the TBP family.

In terms of biological role, general factor that plays a role in the activation of archaeal genes transcribed by RNA polymerase. Binds specifically to the TATA box promoter element which lies close to the position of transcription initiation. This is TATA-box-binding protein 3 from Methanosarcina acetivorans (strain ATCC 35395 / DSM 2834 / JCM 12185 / C2A).